The chain runs to 217 residues: Frizzled-8 (217 aa).

Residues alanine 1 to cysteine 26 are Extracellular-facing. The helical transmembrane segment at threonine 27–leucine 47 threads the bilayer. Topologically, residues serine 48–glutamine 69 are cytoplasmic. The helical transmembrane segment at tyrosine 70 to serine 90 threads the bilayer. The Extracellular portion of the chain corresponds to serine 91–glycine 113. Asparagine 105 is a glycosylation site (N-linked (GlcNAc...) asparagine). The helical transmembrane segment at phenylalanine 114–phenylalanine 134 threads the bilayer. The Cytoplasmic segment spans residues valine 135–arginine 160. A helical transmembrane segment spans residues isoleucine 161 to tyrosine 181. Residues glutamate 182–alanine 209 lie on the Extracellular side of the membrane. Asparagine 194 carries N-linked (GlcNAc...) asparagine glycosylation. A helical transmembrane segment spans residues valine 210–methionine 217.

Belongs to the G-protein coupled receptor Fz/Smo family.

The protein resides in the membrane. It localises to the cell membrane. In terms of biological role, receptor for Wnt proteins. Most of frizzled receptors are coupled to the beta-catenin canonical signaling pathway, which leads to the activation of disheveled proteins, inhibition of GSK-3 kinase, nuclear accumulation of beta-catenin and activation of Wnt target genes. A second signaling pathway involving PKC and calcium fluxes has been seen for some family members, but it is not yet clear if it represents a distinct pathway or if it can be integrated in the canonical pathway, as PKC seems to be required for Wnt-mediated inactivation of GSK-3 kinase. Both pathways seem to involve interactions with G-proteins. May be involved in transduction and intercellular transmission of polarity information during tissue morphogenesis and/or in differentiated tissues. The polypeptide is Frizzled-8 (FZD8) (Gallus gallus (Chicken)).